Here is a 152-residue protein sequence, read N- to C-terminus: Transcriptional regulator MraZ (152 aa).

SpoVT-AbrB domains lie at 5-51 (VNSI…PLPE) and 80-123 (AAEC…DEVL).

It belongs to the MraZ family. As to quaternary structure, forms oligomers.

The protein localises to the cytoplasm. It is found in the nucleoid. The sequence is that of Transcriptional regulator MraZ from Methylococcus capsulatus (strain ATCC 33009 / NCIMB 11132 / Bath).